Reading from the N-terminus, the 170-residue chain is Urease accessory protein UreE (170 aa).

It belongs to the UreE family.

It localises to the cytoplasm. Involved in urease metallocenter assembly. Binds nickel. Probably functions as a nickel donor during metallocenter assembly. The protein is Urease accessory protein UreE of Helicobacter pylori (strain HPAG1).